The chain runs to 586 residues: Penicillin-binding protein activator LpoA (586 aa).

The signal sequence occupies residues 1–26; the sequence is MLSILMQGLRLKKCFLPILVMFFLAG. A lipid anchor (N-palmitoyl cysteine) is attached at cysteine 27. Cysteine 27 is lipidated: S-diacylglycerol cysteine.

Belongs to the LpoA family. Interacts with PBP1a.

It localises to the cell outer membrane. Functionally, regulator of peptidoglycan synthesis that is essential for the function of penicillin-binding protein 1A (PBP1a). This chain is Penicillin-binding protein activator LpoA, found in Histophilus somni (strain 2336) (Haemophilus somnus).